Consider the following 223-residue polypeptide: Endonuclease V (223 aa).

Asp-35 and Asp-103 together coordinate Mg(2+).

This sequence belongs to the endonuclease V family. Mg(2+) serves as cofactor.

The protein localises to the cytoplasm. The catalysed reaction is Endonucleolytic cleavage at apurinic or apyrimidinic sites to products with a 5'-phosphate.. Functionally, DNA repair enzyme involved in the repair of deaminated bases. Selectively cleaves double-stranded DNA at the second phosphodiester bond 3' to a deoxyinosine leaving behind the intact lesion on the nicked DNA. The sequence is that of Endonuclease V from Salmonella schwarzengrund (strain CVM19633).